The sequence spans 631 residues: tRNA uridine 5-carboxymethylaminomethyl modification enzyme MnmG (631 aa).

Gly15–Gly20 is an FAD binding site. The disordered stretch occupies residues Tyr214 to Ser233. Position 276–290 (Gly276–Phe290) interacts with NAD(+).

This sequence belongs to the MnmG family. Homodimer. Heterotetramer of two MnmE and two MnmG subunits. Requires FAD as cofactor.

The protein localises to the cytoplasm. Functionally, NAD-binding protein involved in the addition of a carboxymethylaminomethyl (cmnm) group at the wobble position (U34) of certain tRNAs, forming tRNA-cmnm(5)s(2)U34. This chain is tRNA uridine 5-carboxymethylaminomethyl modification enzyme MnmG, found in Lactobacillus delbrueckii subsp. bulgaricus (strain ATCC BAA-365 / Lb-18).